Here is a 315-residue protein sequence, read N- to C-terminus: MKHLLTAADLSRDDATAILDNADRFREALVGREVKKLPTLRGRTIITMFYENSTRTRVSFEVAGKWMSADVINVSASGSSVAKGESLRDTALTLRAAGADALIIRHPASGAPQQLAAWTLDEHGGPSVINAGDGTHEHPTQALLDALTIRQRLGSVEGKRVVIVGDVLHSRVARSNVALLHTLGAEVVLVAPPTLLPVGVTEWPVTVSHELDAELPLADAVLMLRVQAERMNGGFFPSSREYSVRYGLSEKRQSTLADHAVVLHPGPMLRGMEIAYSVADSSQSAVLQQVSNGVHVRMAVLFHLLVGSEEEAISA.

Positions 55 and 56 each coordinate carbamoyl phosphate. Lys83 lines the L-aspartate pocket. Carbamoyl phosphate is bound by residues Arg105, His138, and Gln141. Positions 171 and 225 each coordinate L-aspartate. Carbamoyl phosphate-binding residues include Gly266 and Pro267.

It belongs to the aspartate/ornithine carbamoyltransferase superfamily. ATCase family. As to quaternary structure, heterododecamer (2C3:3R2) of six catalytic PyrB chains organized as two trimers (C3), and six regulatory PyrI chains organized as three dimers (R2).

The catalysed reaction is carbamoyl phosphate + L-aspartate = N-carbamoyl-L-aspartate + phosphate + H(+). It functions in the pathway pyrimidine metabolism; UMP biosynthesis via de novo pathway; (S)-dihydroorotate from bicarbonate: step 2/3. Functionally, catalyzes the condensation of carbamoyl phosphate and aspartate to form carbamoyl aspartate and inorganic phosphate, the committed step in the de novo pyrimidine nucleotide biosynthesis pathway. This Mycolicibacterium gilvum (strain PYR-GCK) (Mycobacterium gilvum (strain PYR-GCK)) protein is Aspartate carbamoyltransferase catalytic subunit.